A 165-amino-acid chain; its full sequence is Transcription elongation factor A protein-like 1 (165 aa).

The segment at 1-101 is disordered; that stretch reads MENTRSENEE…EQPPCGVGKH (101 aa). The span at 33 to 60 shows a compositional bias: acidic residues; sequence CSEEDQSSEDLSSEEQSSEEEFFPEELL.

The protein belongs to the TFS-II family. TFA subfamily.

It localises to the nucleus. May be involved in transcriptional regulation. Modulates various viral and cellular promoters in a promoter context-dependent manner. Does not bind DNA directly. This is Transcription elongation factor A protein-like 1 from Mus musculus (Mouse).